Reading from the N-terminus, the 637-residue chain is ATP-dependent zinc metalloprotease FtsH (637 aa).

Over 1–6 (MNNQGR) the chain is Cytoplasmic. Residues 7 to 27 (SILAWAALFIFVILLFNVFQS) form a helical membrane-spanning segment. Residues 28-103 (DGLLGVRNNI…VVPLETRMNT (76 aa)) are Periplasmic-facing. The helical transmembrane segment at 104-124 (FLGFLISWFPMLLLIGVWVFF) threads the bilayer. The Cytoplasmic portion of the chain corresponds to 125-637 (MRQMHGGGKA…TKAQKENIAS (513 aa)). Residue 195–202 (GPPGTGKT) coordinates ATP. Position 417 (His417) interacts with Zn(2+). Glu418 is a catalytic residue. Zn(2+) is bound by residues His421 and Asp495. Residues 617-637 (DKEKLHEKTKTTKAQKENIAS) form a disordered region.

It in the central section; belongs to the AAA ATPase family. In the C-terminal section; belongs to the peptidase M41 family. In terms of assembly, homohexamer. It depends on Zn(2+) as a cofactor.

The protein resides in the cell inner membrane. In terms of biological role, acts as a processive, ATP-dependent zinc metallopeptidase for both cytoplasmic and membrane proteins. Plays a role in the quality control of integral membrane proteins. In Rickettsia typhi (strain ATCC VR-144 / Wilmington), this protein is ATP-dependent zinc metalloprotease FtsH.